We begin with the raw amino-acid sequence, 227 residues long: MELVFIRHGLSEWNALNLFTGWRDVNLSEKGVEEAKEAGRKLKAAGFEFDIAFTSVLTRAIKTCNLVLEESNQLWVPQIKTWRLNERHYGGLQGLNKAEAAAEHGDEQVRIWRRSYDVLPPVLDPKDPNSAHNDRRYAHLPADVVPDCENLKVTLERVLPFWEDQIAPAIKAGKRVLVAAHGNSLRALAKHIEGISDADIMDLEIPTGQPLVYTLDDNLKVVSKRYL.

Residues 7–14 (RHGLSEWN), 20–21 (TG), arginine 59, 86–89 (ERHY), lysine 97, 113–114 (RR), and 182–183 (GN) contribute to the substrate site. Histidine 8 (tele-phosphohistidine intermediate) is an active-site residue. Glutamate 86 acts as the Proton donor/acceptor in catalysis.

This sequence belongs to the phosphoglycerate mutase family. BPG-dependent PGAM subfamily. In terms of assembly, homodimer.

The catalysed reaction is (2R)-2-phosphoglycerate = (2R)-3-phosphoglycerate. It functions in the pathway carbohydrate degradation; glycolysis; pyruvate from D-glyceraldehyde 3-phosphate: step 3/5. In terms of biological role, catalyzes the interconversion of 2-phosphoglycerate and 3-phosphoglycerate. The protein is 2,3-bisphosphoglycerate-dependent phosphoglycerate mutase of Mannheimia succiniciproducens (strain KCTC 0769BP / MBEL55E).